Here is a 119-residue protein sequence, read N- to C-terminus: MNLAAYFPVLLFLIVGTGLGVALVSIGKILGPNKPDTEKNAPYECGFEAFEDARMKFDVRYYLVAILFIIFDLETAFLFPWGVALRDIGWPGFMAMMIFLLEFLLGFAYIWKKGGLDWE.

3 helical membrane passes run 7–27 (FPVL…VSIG), 63–83 (LVAI…PWGV), and 88–108 (IGWP…LGFA).

It belongs to the complex I subunit 3 family. NDH-1 is composed of 14 different subunits. Subunits NuoA, H, J, K, L, M, N constitute the membrane sector of the complex.

It localises to the cell inner membrane. The catalysed reaction is a quinone + NADH + 5 H(+)(in) = a quinol + NAD(+) + 4 H(+)(out). Functionally, NDH-1 shuttles electrons from NADH, via FMN and iron-sulfur (Fe-S) centers, to quinones in the respiratory chain. The immediate electron acceptor for the enzyme in this species is believed to be ubiquinone. Couples the redox reaction to proton translocation (for every two electrons transferred, four hydrogen ions are translocated across the cytoplasmic membrane), and thus conserves the redox energy in a proton gradient. The chain is NADH-quinone oxidoreductase subunit A from Paraburkholderia xenovorans (strain LB400).